The chain runs to 87 residues: MKPIVYMLLFCAFTVVILGHPNNHGALIPHHDKLPNGESCTRPGYSCSESSQCCTPVDGETFTYGCGRAWMEGSKICYICNRESSMC.

The signal sequence occupies residues Met-1–Gly-19. 4 cysteine pairs are disulfide-bonded: Cys-40-Cys-54, Cys-40-Cys-77, Cys-53-Cys-66, and Cys-80-Cys-87.

This sequence belongs to the neurotoxin 27 (Jztx-72) family. ICK-41 subfamily. Expressed by the venom gland.

It is found in the secreted. Its function is as follows. Probable neurotoxin with ion channel impairing activity. In Trittame loki (Brush-footed trapdoor spider), this protein is Toxin ICK-41.